The chain runs to 389 residues: S-adenosylmethionine synthase 3 (389 aa).

Residue E9 coordinates Mg(2+). H15 is an ATP binding site. E43 lines the K(+) pocket. The L-methionine site is built by E56 and Q99. Residues 167–169, 235–238, D246, 252–253, A269, K273, and K277 each bind ATP; these read DGK, SGRF, and RK. D246 is a binding site for L-methionine. K277 contacts L-methionine.

It belongs to the AdoMet synthase family. Homotetramer. Mn(2+) is required as a cofactor. It depends on Mg(2+) as a cofactor. Requires Co(2+) as cofactor. K(+) serves as cofactor.

The protein resides in the cytoplasm. It carries out the reaction L-methionine + ATP + H2O = S-adenosyl-L-methionine + phosphate + diphosphate. The protein operates within amino-acid biosynthesis; S-adenosyl-L-methionine biosynthesis; S-adenosyl-L-methionine from L-methionine: step 1/1. Catalyzes the formation of S-adenosylmethionine from methionine and ATP. The reaction comprises two steps that are both catalyzed by the same enzyme: formation of S-adenosylmethionine (AdoMet) and triphosphate, and subsequent hydrolysis of the triphosphate. The sequence is that of S-adenosylmethionine synthase 3 (METK3) from Vitis vinifera (Grape).